We begin with the raw amino-acid sequence, 88 residues long: Small ribosomal subunit protein bS20 (88 aa).

The tract at residues 1-25 (MANTAQALKRIRQTNKARAQNASQR) is disordered. Residues 16 to 25 (KARAQNASQR) are compositionally biased toward polar residues.

The protein belongs to the bacterial ribosomal protein bS20 family.

In terms of biological role, binds directly to 16S ribosomal RNA. The polypeptide is Small ribosomal subunit protein bS20 (Dichelobacter nodosus (strain VCS1703A)).